Reading from the N-terminus, the 278-residue chain is Serine/arginine-rich splicing factor SR34B (278 aa).

One can recognise an RRM 1 domain in the interval 7–82; the sequence is RTIYVGNLPG…HHLRVELAHG (76 aa). The span at 81 to 91 shows a compositional bias: basic and acidic residues; it reads HGGRRSSHDAR. 2 disordered regions span residues 81–121 and 192–263; these read HGGR…SEYR and EYDS…RSLS. Over residues 95-107 the composition is skewed to gly residues; it reads SGRGRGGRGGGDG. 2 stretches are compositionally biased toward basic and acidic residues: residues 108-120 and 192-201; these read GGRERGPSRRSEY and EYDSRRDSRS. Positions 120-195 constitute an RRM 2 domain; sequence YRVVVSGLPS…EYVRVREYDS (76 aa). 9 positions are modified to phosphoserine: S201, S203, S225, S231, S233, S242, S250, S259, and S263. Residues 207–243 show a composition bias toward basic residues; the sequence is SYSKSRSRGRSPSRSRSRSRSRSKSRSPKAKSLRRSP.

It belongs to the splicing factor SR family. SR subfamily. In terms of assembly, component of the spliceosome.

It localises to the nucleus speckle. The protein localises to the nucleus. Its subcellular location is the nucleoplasm. Probably involved in intron recognition and spliceosome assembly. The protein is Serine/arginine-rich splicing factor SR34B (SR34B) of Arabidopsis thaliana (Mouse-ear cress).